We begin with the raw amino-acid sequence, 109 residues long: Large ribosomal subunit protein uL24 (109 aa).

A disordered region spans residues 1 to 24 (MANVTTDIKRNDTVAVTSGKDKGK).

It belongs to the universal ribosomal protein uL24 family. As to quaternary structure, part of the 50S ribosomal subunit.

Its function is as follows. One of two assembly initiator proteins, it binds directly to the 5'-end of the 23S rRNA, where it nucleates assembly of the 50S subunit. Functionally, one of the proteins that surrounds the polypeptide exit tunnel on the outside of the subunit. The sequence is that of Large ribosomal subunit protein uL24 from Koribacter versatilis (strain Ellin345).